A 144-amino-acid polypeptide reads, in one-letter code: MKLLKGVDCTSCCIAIVIARFNSFINENLLSGAINALQRKGQVKAENITVIRCPGAYELPLAAQQIAKQGNYDAIIAIGAVIRGGTPHFDFVAGECNKGLAQVALEYQTPVAFGVLTVDSIEQAIERAGTKMGNKGEEAALSAL.

5-amino-6-(D-ribitylamino)uracil is bound by residues F21, 56–58 (AYE), and 80–82 (AVI). A (2S)-2-hydroxy-3-oxobutyl phosphate-binding site is contributed by 85 to 86 (GT). The active-site Proton donor is H88. F113 lines the 5-amino-6-(D-ribitylamino)uracil pocket. R127 is a (2S)-2-hydroxy-3-oxobutyl phosphate binding site.

This sequence belongs to the DMRL synthase family. Forms an icosahedral capsid composed of 60 subunits, arranged as a dodecamer of pentamers.

The catalysed reaction is (2S)-2-hydroxy-3-oxobutyl phosphate + 5-amino-6-(D-ribitylamino)uracil = 6,7-dimethyl-8-(1-D-ribityl)lumazine + phosphate + 2 H2O + H(+). Its pathway is cofactor biosynthesis; riboflavin biosynthesis; riboflavin from 2-hydroxy-3-oxobutyl phosphate and 5-amino-6-(D-ribitylamino)uracil: step 1/2. In terms of biological role, catalyzes the formation of 6,7-dimethyl-8-ribityllumazine by condensation of 5-amino-6-(D-ribitylamino)uracil with 3,4-dihydroxy-2-butanone 4-phosphate. This is the penultimate step in the biosynthesis of riboflavin. The sequence is that of 6,7-dimethyl-8-ribityllumazine synthase (ribH) from Photobacterium leiognathi.